A 287-amino-acid chain; its full sequence is Ketoacyl reductase HetN (287 aa).

L11–C35 is a binding site for NAD(+). S142 contacts substrate. Y155 (proton acceptor) is an active-site residue.

It belongs to the short-chain dehydrogenases/reductases (SDR) family.

Its function is as follows. May be involved in repressing heterocyst differentiation and may be essential for preventing all vegetative cells from differentiating. This chain is Ketoacyl reductase HetN (hetN), found in Nostoc sp. (strain PCC 7120 / SAG 25.82 / UTEX 2576).